The chain runs to 201 residues: Holliday junction branch migration complex subunit RuvA (201 aa).

The domain I stretch occupies residues 1–63 (MIGCLIGEVF…EDAQQLYGFI (63 aa)). Residues 64-142 (DAQEKLIFRT…ALSVQATTGS (79 aa)) are domain II. The interval 143 to 152 (TVTSAQIQFS) is flexible linker. A domain III region spans residues 152 to 201 (SSNSPIAEAEAALQSLGYKPIEAQKAIAAVKADYTEAADLIRAALKSMMK).

Belongs to the RuvA family. As to quaternary structure, homotetramer. Forms an RuvA(8)-RuvB(12)-Holliday junction (HJ) complex. HJ DNA is sandwiched between 2 RuvA tetramers; dsDNA enters through RuvA and exits via RuvB. An RuvB hexamer assembles on each DNA strand where it exits the tetramer. Each RuvB hexamer is contacted by two RuvA subunits (via domain III) on 2 adjacent RuvB subunits; this complex drives branch migration. In the full resolvosome a probable DNA-RuvA(4)-RuvB(12)-RuvC(2) complex forms which resolves the HJ.

It localises to the cytoplasm. Its function is as follows. The RuvA-RuvB-RuvC complex processes Holliday junction (HJ) DNA during genetic recombination and DNA repair, while the RuvA-RuvB complex plays an important role in the rescue of blocked DNA replication forks via replication fork reversal (RFR). RuvA specifically binds to HJ cruciform DNA, conferring on it an open structure. The RuvB hexamer acts as an ATP-dependent pump, pulling dsDNA into and through the RuvAB complex. HJ branch migration allows RuvC to scan DNA until it finds its consensus sequence, where it cleaves and resolves the cruciform DNA. This chain is Holliday junction branch migration complex subunit RuvA, found in Acinetobacter baylyi (strain ATCC 33305 / BD413 / ADP1).